Consider the following 153-residue polypeptide: Ribosome maturation factor RimP (153 aa).

The protein belongs to the RimP family.

The protein localises to the cytoplasm. Functionally, required for maturation of 30S ribosomal subunits. This Picosynechococcus sp. (strain ATCC 27264 / PCC 7002 / PR-6) (Agmenellum quadruplicatum) protein is Ribosome maturation factor RimP.